The chain runs to 338 residues: Ribosomal RNA small subunit methyltransferase C (338 aa).

Belongs to the methyltransferase superfamily. RsmC family. Monomer.

It localises to the cytoplasm. It carries out the reaction guanosine(1207) in 16S rRNA + S-adenosyl-L-methionine = N(2)-methylguanosine(1207) in 16S rRNA + S-adenosyl-L-homocysteine + H(+). Specifically methylates the guanine in position 1207 of 16S rRNA in the 30S particle. The polypeptide is Ribosomal RNA small subunit methyltransferase C (Acinetobacter baylyi (strain ATCC 33305 / BD413 / ADP1)).